We begin with the raw amino-acid sequence, 198 residues long: Recombination protein RecR (198 aa).

The segment at 57-72 (CSVCGHITDQDPCYIC) adopts a C4-type zinc-finger fold. The 96-residue stretch at 80–175 (SVICVVQDPK…KLSRIAHGLP (96 aa)) folds into the Toprim domain.

It belongs to the RecR family.

May play a role in DNA repair. It seems to be involved in an RecBC-independent recombinational process of DNA repair. It may act with RecF and RecO. This Bacillus licheniformis (strain ATCC 14580 / DSM 13 / JCM 2505 / CCUG 7422 / NBRC 12200 / NCIMB 9375 / NCTC 10341 / NRRL NRS-1264 / Gibson 46) protein is Recombination protein RecR.